We begin with the raw amino-acid sequence, 491 residues long: MLNLLLLSLSVCLLYVFITAFWNLYIHPLHHIPGPRQWIAFPILRHLSAIRGTLDSDLRRWHFRYGSAVRFGPDEASFITAEAWKDIYGSTRPQLPRVISSGSNTSDIINANDANHARYRKALAHAFSTNGVRDQEPLVIDYIVKLVGRLKEVAESKLPTDMVKWYKLTTFDMIGDLAFGEHFGGLEKSEYHHWVATVGRFTRIIPFLKIMDAYPVLFKVFLAVMPQSFWKAQAEQAEYTKLTVQKRLNSSIAQDRPDFMDSMLRHRNEKDKLSEHELESNASVLVLAGSETPADLLSGVTYWLLKTPEALEKATGEVRSLMKAESEITFSSVEARLPYLLACVNEGLRLYPSLPGELQRMSPDTPMKISGYDIPPRTRVSVHQYAAYSSPTNFHDPDRFIPERWLPEAKTNPSSPYLFDNREVFQPFSVGPRGCIGKSLAYPLMRTIIARVLWNFDFDLCEESRSWHIQKTFGLWEKPPLICKLTQRKQS.

Residues Leu5–His27 form a helical membrane-spanning segment. Residue Cys435 participates in heme binding.

This sequence belongs to the cytochrome P450 family. Heme is required as a cofactor.

It localises to the membrane. Its pathway is secondary metabolite biosynthesis; terpenoid biosynthesis. Its function is as follows. Cytochrome P450 monooxygenase; part of the gene cluster that mediates the biosynthesis of 15-deoxyoxalicine B. The first step of the pathway is the synthesis of nicotinyl-CoA from nicotinic acid by the nicotinic acid-CoA ligase olcI. Nicotinyl-CoA is then a substrate of polyketide synthase olcA to produce 4-hydroxy-6-(3-pyridinyl)-2H-pyran-2-one (HPPO) which is further prenylated by the polyprenyl transferase olcH to yield geranylgeranyl-HPPO. Geranylgeranyl pyrophosphate is provided by the cluster-specific geranylgeranyl pyrophosphate synthase olcC. The FAD-dependent monooxygenase olcE catalyzes the epoxidation of geranylgeranyl-HPPO and the terpene cyclase olcD catalyzes the cyclization of the terpenoid component, resulting in the formation of the tricyclic terpene moiety seen in predecaturin E. The cytochrome P450 monooxygenase then catalyzes the allylic oxidation of predecaturin E, which is followed by spirocylization with concomitant loss of one molecule of water to form decaturin E. Decaturin E is the substrate of the cytochrome P450 monooxygenase olcJ which hydroxylates it at the C-29 position to form decaturin F. The short-chain dehydrogenase/reductase olcF may catalyze the oxidation of decaturin F to generate the 29-hydroxyl-27-one intermediate, and subsequent hemiacetal formation probably leads to the formation of decaturin C. The dioxygenase olcK may be a peroxisomal enzyme that catalyzes the hydroxylation of decaturin C into decaturin A once decaturin C is shuttled into the peroxisome by the MFS transporter olcL. Finally the cytochrome P450 monooxygenase olcB catalyzes the oxidative rearrangement to yield 15-deoxyoxalicine B. In the absence of olcJ, decaturin E may be shunted to a pathway in which it is oxidized to a ketone, possibly by olcF, to form decaturin D, which undergoes further allylic oxidation to yield decaturin G. Moreover, in the absence of oclK or oclL, oclB can convert decaturin C into 15-deoxyoxalicine A. The chain is Cytochrome P450 monooxygenase olcB from Penicillium canescens.